The sequence spans 300 residues: Bidirectional sugar transporter SWEET12 (300 aa).

Residues 1-4 lie on the Extracellular side of the membrane; the sequence is MVQA. The helical transmembrane segment at 5 to 25 threads the bilayer; that stretch reads LVFAVGIVGNILSFLVILAPV. The MtN3/slv 1 domain occupies 8–92; it reads AVGIVGNILS…TVYLLYAPRQ (85 aa). At 26 to 38 the chain is on the cytoplasmic side; that stretch reads PTFYRVYKKKSTE. The helical transmembrane segment at 39–61 threads the bilayer; the sequence is SFQSVPYAVALLSAMLWLYYALL. Residues 62 to 67 lie on the Extracellular side of the membrane; that stretch reads TSDLLL. A helical transmembrane segment spans residues 68–88; the sequence is LSINSIGCLVESLYLTVYLLY. Over 89 to 99 the chain is Cytoplasmic; it reads APRQAMAFTLK. Residues 100–120 traverse the membrane as a helical segment; it reads LVCAMNLALFAAVVAALQLLV. The Extracellular portion of the chain corresponds to 121 to 128; the sequence is KATDRRVT. Residues 129–149 form a helical membrane-spanning segment; sequence LAGGIGASFALAVFVAPLTII. The MtN3/slv 2 domain maps to 131–213; it reads GGIGASFALA…VLYVVYKNPK (83 aa). At 150–162 the chain is on the cytoplasmic side; that stretch reads RQVIRTKSVEFMP. Residues 163-183 traverse the membrane as a helical segment; sequence FWLSFFLTLSAVVWFFYGLLM. At 184-185 the chain is on the extracellular side; that stretch reads KD. A helical membrane pass occupies residues 186-206; that stretch reads FFVATPNVLGLLFGLAQMVLY. Residues 207-300 lie on the Cytoplasmic side of the membrane; the sequence is VVYKNPKKNS…PPALPAVEVA (94 aa). The disordered stretch occupies residues 256 to 300; sequence ADLEAAAPATPQRPADDDAIDHRSVVVDIPPPPQPPPALPAVEVA. Basic and acidic residues predominate over residues 269–280; sequence PADDDAIDHRSV. Pro residues predominate over residues 284 to 294; that stretch reads IPPPPQPPPAL.

Belongs to the SWEET sugar transporter family. As to quaternary structure, forms homooligomers and/or heterooligomers.

It localises to the cell membrane. Mediates both low-affinity uptake and efflux of sugar across the plasma membrane. Functionally, confers blight susceptibility. Confers TAL effector-mediated susceptibility to Xanthomonas oryzae pv. oryzae. This chain is Bidirectional sugar transporter SWEET12 (SWEET12), found in Oryza sativa subsp. japonica (Rice).